We begin with the raw amino-acid sequence, 278 residues long: Phosphonates import ATP-binding protein PhnC 1 (278 aa).

One can recognise an ABC transporter domain in the interval 5-253; the sequence is IRVDSLNKTF…FLNELYGAEG (249 aa). 37–44 provides a ligand contact to ATP; sequence GASGSGKS.

This sequence belongs to the ABC transporter superfamily. Phosphonates importer (TC 3.A.1.9.1) family. The complex is composed of two ATP-binding proteins (PhnC), two transmembrane proteins (PhnE) and a solute-binding protein (PhnD).

The protein localises to the cell inner membrane. It carries out the reaction phosphonate(out) + ATP + H2O = phosphonate(in) + ADP + phosphate + H(+). Part of the ABC transporter complex PhnCDE involved in phosphonates import. Responsible for energy coupling to the transport system. The sequence is that of Phosphonates import ATP-binding protein PhnC 1 from Pseudomonas aeruginosa (strain UCBPP-PA14).